The primary structure comprises 409 residues: U-box domain-containing protein 28 (409 aa).

A U-box domain is found at 10–84 (TVPCFFKCPI…DHWSDSINRR (75 aa)). 3 ARM repeats span residues 178-218 (RLSN…FIAV), 219-261 (DAES…AIAS), and 263-304 (KRVK…AISS).

The enzyme catalyses S-ubiquitinyl-[E2 ubiquitin-conjugating enzyme]-L-cysteine + [acceptor protein]-L-lysine = [E2 ubiquitin-conjugating enzyme]-L-cysteine + N(6)-ubiquitinyl-[acceptor protein]-L-lysine.. It functions in the pathway protein modification; protein ubiquitination. Functionally, functions as an E3 ubiquitin ligase. The polypeptide is U-box domain-containing protein 28 (PUB28) (Arabidopsis thaliana (Mouse-ear cress)).